The primary structure comprises 141 residues: N,N-dimethylformamidase alpha subunit (141 aa).

Heterotetramer of two DmfA1 (alpha) and two DmfA2 (beta) subunits.

The catalysed reaction is N,N-dimethylformamide + H2O = dimethylamine + formate. Hydrolyzes N,N-dimethylformamide, and to a lesser extent N,N-dimethylacetamide and N,N-diethylacetamide. Has no activity against the substituted amides N-methylformamide, N-ethylformamide, N-ethylformamide and N-methylacetamide or the unsubstituted amides formamide, nicotinamide, acetoamide, benzamide, acetamide and acrylamide. The polypeptide is N,N-dimethylformamidase alpha subunit (Paracoccus aminophilus).